The primary structure comprises 277 residues: Insulin-induced gene 1 protein (277 aa).

The Cytoplasmic portion of the chain corresponds to Met-1–Leu-84. A compositionally biased stretch (low complexity) spans His-51–Ala-66. The segment at His-51 to Gly-73 is disordered. Residues Leu-85 to Ile-107 traverse the membrane as a helical segment. The Lumenal segment spans residues Gln-108 to Ala-126. A helical membrane pass occupies residues Trp-127–Tyr-144. Over Pro-145–Arg-159 the chain is Cytoplasmic. Glycyl lysine isopeptide (Lys-Gly) (interchain with G-Cter in ubiquitin) cross-links involve residues Lys-156 and Lys-158. A helical transmembrane segment spans residues Glu-160–Asp-182. The Lumenal segment spans residues Phe-183–Asn-185. A helical transmembrane segment spans residues Asn-186–Phe-204. Residues Asp-205–Ser-209 lie on the Cytoplasmic side of the membrane. Ser-207 is subject to Phosphoserine; by PCK1. Residues Gly-210–Asn-231 form a helical membrane-spanning segment. Topologically, residues Gly-232–Arg-245 are lumenal. Residues Ser-246–Gly-263 form a helical membrane-spanning segment. Residues Arg-264–Asp-277 lie on the Cytoplasmic side of the membrane. The KxHxx motif lies at Pro-271–Asp-277.

The protein belongs to the INSIG family. As to quaternary structure, interacts with SCAP; interaction is direct and only takes place in the presence of sterols; it prevents interaction between SCAP and the coat protein complex II (COPII). Associates with the SCAP-SREBP complex (composed of SCAP and SREBF1/SREBP1 or SREBF2/SREBP2); association is mediated via its interaction with SCAP and only takes place in the presence of sterols. Interaction with SCAP is mutually exclusive with PAQR3. Interacts with HMGCR (via its SSD); the interaction, accelerated by sterols, leads to the recruitment of HMGCR to AMFR/gp78 for its ubiquitination by the sterol-mediated ERAD pathway. Interacts with AMFR/gp78 (via its membrane domain); the interaction recruits HMCR at the ER membrane for its ubiquitination and degradation by the sterol-mediated ERAD pathway. Interacts with SOAT2/ACAT2; leading to promote recruitment of AMFR/gp78 and subsequent ubiquitination of SOAT2/ACAT2. Interacts with RNF139. Interacts with RNF145. Post-translationally, phosphorylation at Ser-207 by PCK1 reduces binding to oxysterol, disrupting the interaction between INSIG1 and SCAP, thereby promoting nuclear translocation of SREBP proteins (SREBF1/SREBP1 or SREBF2/SREBP2) and subsequent transcription of downstream lipogenesis-related genes. Ubiquitinated by AMFR/gp78 in response to sterol deprivation, leading to its degradation: when the SCAP-SREBP complex becomes dissociated from INSIG1, INSIG1 is then ubiquitinated and degraded in proteasomes. Although ubiquitination is required for rapid INSIG1 degradation, it is not required for release of the SCAP-SREBP complex. Ubiquitinated by RNF139. Expressed in all tissues tested with highest expression in the liver.

The protein resides in the endoplasmic reticulum membrane. Its function is as follows. Oxysterol-binding protein that mediates feedback control of cholesterol synthesis by controlling both endoplasmic reticulum to Golgi transport of SCAP and degradation of HMGCR. Acts as a negative regulator of cholesterol biosynthesis by mediating the retention of the SCAP-SREBP complex in the endoplasmic reticulum, thereby blocking the processing of sterol regulatory element-binding proteins (SREBPs) SREBF1/SREBP1 and SREBF2/SREBP2. Binds oxysterol, including 25-hydroxycholesterol, regulating interaction with SCAP and retention of the SCAP-SREBP complex in the endoplasmic reticulum. In presence of oxysterol, interacts with SCAP, retaining the SCAP-SREBP complex in the endoplasmic reticulum, thereby preventing SCAP from escorting SREBF1/SREBP1 and SREBF2/SREBP2 to the Golgi. Sterol deprivation or phosphorylation by PCK1 reduce oxysterol-binding, disrupting the interaction between INSIG1 and SCAP, thereby promoting Golgi transport of the SCAP-SREBP complex, followed by processing and nuclear translocation of SREBF1/SREBP1 and SREBF2/SREBP2. Also regulates cholesterol synthesis by regulating degradation of HMGCR: initiates the sterol-mediated ubiquitin-mediated endoplasmic reticulum-associated degradation (ERAD) of HMGCR via recruitment of the reductase to the ubiquitin ligases AMFR/gp78 and/or RNF139. Also regulates degradation of SOAT2/ACAT2 when the lipid levels are low: initiates the ubiquitin-mediated degradation of SOAT2/ACAT2 via recruitment of the ubiquitin ligases AMFR/gp78. This is Insulin-induced gene 1 protein from Homo sapiens (Human).